Reading from the N-terminus, the 225-residue chain is Respiratory nitrate reductase 1 gamma chain (225 aa).

An N-formylmethionine modification is found at Met1. Topologically, residues 1 to 3 (MQF) are periplasmic. The chain crosses the membrane as a helical span at residues 4–29 (LNMFFFDIYPYIAGAVFLIGSWLRYD). The Cytoplasmic portion of the chain corresponds to 30–47 (YGQYTWRAASSQMLDRKG). A helical membrane pass occupies residues 48 to 70 (MNLASNLFHIGILGIFVGHFFGM). The heme b site is built by His56 and His66. The Periplasmic portion of the chain corresponds to 71–82 (LTPHWMYEAWLP). The helical transmembrane segment at 83–112 (IEVKQKMAMFAGGASGVLCLIGGVLLLKRR) threads the bilayer. At 113-124 (LFSPRVRATTTG) the chain is on the cytoplasmic side. A helical transmembrane segment spans residues 125 to 148 (ADILILSLLVIQCALGLLTIPFSA). Residues 149–182 (QHMDGSEMMKLVGWAQSVVTFHGGASQHLDGVAF) lie on the Periplasmic side of the membrane. Residues 183-198 (IFRLHLVLGMTLFLLF) form a helical membrane-spanning segment. Heme b contacts are provided by His187 and His205. Residues 199–225 (PFSRLIHIWSVPVEYLTRKYQLVRARH) lie on the Cytoplasmic side of the membrane.

As to quaternary structure, dimer of heterotrimers each composed of an alpha, a beta and a gamma chain. Alpha and beta are catalytic chains; gamma chains are involved in binding the enzyme complex to the cytoplasmic membrane. Requires heme as cofactor.

It localises to the cell inner membrane. The catalysed reaction is nitrate + a quinol = a quinone + nitrite + H2O. Functionally, the nitrate reductase enzyme complex allows E.coli to use nitrate as an electron acceptor during anaerobic growth. The gamma chain is a membrane-embedded heme-iron unit resembling cytochrome b, which transfers electrons from quinones to the beta subunit. The sequence is that of Respiratory nitrate reductase 1 gamma chain (narI) from Escherichia coli (strain K12).